Here is a 101-residue protein sequence, read N- to C-terminus: Small ribosomal subunit protein uS14 (101 aa).

The disordered stretch occupies residues 53–72 (RDAAAVRVRNRDSHDGRPRG). Positions 61–70 (RNRDSHDGRP) are enriched in basic and acidic residues.

The protein belongs to the universal ribosomal protein uS14 family. In terms of assembly, part of the 30S ribosomal subunit. Contacts proteins S3 and S10.

Functionally, binds 16S rRNA, required for the assembly of 30S particles and may also be responsible for determining the conformation of the 16S rRNA at the A site. The protein is Small ribosomal subunit protein uS14 of Corynebacterium glutamicum (strain ATCC 13032 / DSM 20300 / JCM 1318 / BCRC 11384 / CCUG 27702 / LMG 3730 / NBRC 12168 / NCIMB 10025 / NRRL B-2784 / 534).